The following is a 253-amino-acid chain: 2-C-methyl-D-erythritol 4-phosphate cytidylyltransferase (253 aa).

Residues methionine 1 to leucine 28 are disordered.

The protein belongs to the IspD/TarI cytidylyltransferase family. IspD subfamily.

The catalysed reaction is 2-C-methyl-D-erythritol 4-phosphate + CTP + H(+) = 4-CDP-2-C-methyl-D-erythritol + diphosphate. Its pathway is isoprenoid biosynthesis; isopentenyl diphosphate biosynthesis via DXP pathway; isopentenyl diphosphate from 1-deoxy-D-xylulose 5-phosphate: step 2/6. Functionally, catalyzes the formation of 4-diphosphocytidyl-2-C-methyl-D-erythritol from CTP and 2-C-methyl-D-erythritol 4-phosphate (MEP). The sequence is that of 2-C-methyl-D-erythritol 4-phosphate cytidylyltransferase from Ralstonia nicotianae (strain ATCC BAA-1114 / GMI1000) (Ralstonia solanacearum).